The chain runs to 646 residues: Serine/threonine-protein kinase sck2 (646 aa).

Disordered regions lie at residues 17–85 (VSTN…LPEV) and 143–176 (GRDI…IQRT). Residues 68 to 80 (SDQSTVGNRNSND) show a composition bias toward polar residues. The segment covering 149–165 (SSRDSANVSRSSSMMSS) has biased composition (low complexity). The 262-residue stretch at 266–527 (FVPLKLIGKG…VEEVMKHPFF (262 aa)) folds into the Protein kinase domain. Residues 272–280 (IGKGTFGQV) and lysine 295 contribute to the ATP site. The active-site Proton acceptor is the aspartate 392. The region spanning 528 to 605 (DGIDWKKLAA…IDASAMDEAF (78 aa)) is the AGC-kinase C-terminal domain. The interval 609–646 (NSNDSASSISSQDDYSKDNSDMDLNRANDEVFMGQIDP) is disordered. A compositionally biased stretch (low complexity) spans 610–621 (SNDSASSISSQD). Positions 622–637 (DYSKDNSDMDLNRAND) are enriched in basic and acidic residues.

The protein belongs to the protein kinase superfamily. AGC Ser/Thr protein kinase family. PKC subfamily.

It carries out the reaction L-seryl-[protein] + ATP = O-phospho-L-seryl-[protein] + ADP + H(+). The enzyme catalyses L-threonyl-[protein] + ATP = O-phospho-L-threonyl-[protein] + ADP + H(+). Its function is as follows. Protein kinase that is part of growth control pathway which is at least partially redundant with the cAMP pathway. This is Serine/threonine-protein kinase sck2 (sck2) from Schizosaccharomyces pombe (strain 972 / ATCC 24843) (Fission yeast).